A 576-amino-acid polypeptide reads, in one-letter code: MAGUK p55 subfamily member 7 (576 aa).

L27 domains follow at residues 10–63 (SDTG…YEKE) and 65–122 (PMPV…YDPV). In terms of domain architecture, PDZ spans 139–220 (IIRLVKNREP…AITFKIIPSI (82 aa)). One can recognise an SH3 domain in the interval 228 to 298 (DGKMFVKALF…PSKQFQERRF (71 aa)). Residues 368–560 (YRLVILVGPV…AYNELRSTLE (193 aa)) enclose the Guanylate kinase-like domain.

It belongs to the MAGUK family.

It localises to the membrane. Its subcellular location is the cell junction. It is found in the tight junction. The protein localises to the adherens junction. In terms of biological role, acts as an important adapter that promotes epithelial cell polarity and tight junction formation. Involved in the assembly of protein complexes at sites of cell-cell contact. In Xenopus tropicalis (Western clawed frog), this protein is MAGUK p55 subfamily member 7 (mpp7).